A 706-amino-acid polypeptide reads, in one-letter code: Termination factor NPH-I homolog (706 aa).

The Helicase ATP-binding domain occupies 62–227 (IGQGENTRGL…VPCFNMLSGR (166 aa)). Residue 75–82 (HQMGMGKT) coordinates ATP. The short motif at 168–171 (DEAH) is the DEAH box element. A Helicase C-terminal domain is found at 417 to 599 (QCLQPLKVLE…HLNSAFRDLL (183 aa)).

It belongs to the DEAD box helicase family. DEAH subfamily. In terms of assembly, part of the viral DNA-directed RNA polymerase that consists of 8 polII-like subunits (RPB1, RPB2, RPB3, RPB5, RPB6, RPB7, RPB9, RPB10), a capping enzyme and a termination factor.

It is found in the virion. Functionally, putative DNA-dependent ATPase required for providing the needed energy to achieve the termination of early transcripts. In Ornithodoros (relapsing fever ticks), this protein is Termination factor NPH-I homolog.